Reading from the N-terminus, the 863-residue chain is Leucine--tRNA ligase (863 aa).

A 'HIGH' region motif is present at residues 42 to 52; it reads PYPSGRLHMGH. The short motif at 618-622 is the 'KMSKS' region element; the sequence is KMSKS. Lys-621 lines the ATP pocket.

Belongs to the class-I aminoacyl-tRNA synthetase family.

Its subcellular location is the cytoplasm. The catalysed reaction is tRNA(Leu) + L-leucine + ATP = L-leucyl-tRNA(Leu) + AMP + diphosphate. This Colwellia psychrerythraea (strain 34H / ATCC BAA-681) (Vibrio psychroerythus) protein is Leucine--tRNA ligase.